The following is a 241-amino-acid chain: Small ribosomal subunit protein uS2 (241 aa).

This sequence belongs to the universal ribosomal protein uS2 family.

This chain is Small ribosomal subunit protein uS2, found in Citrobacter koseri (strain ATCC BAA-895 / CDC 4225-83 / SGSC4696).